A 567-amino-acid polypeptide reads, in one-letter code: DNA ligase B (567 aa).

The N6-AMP-lysine intermediate role is filled by Lys126.

It belongs to the NAD-dependent DNA ligase family. LigB subfamily.

It catalyses the reaction NAD(+) + (deoxyribonucleotide)n-3'-hydroxyl + 5'-phospho-(deoxyribonucleotide)m = (deoxyribonucleotide)n+m + AMP + beta-nicotinamide D-nucleotide.. Functionally, catalyzes the formation of phosphodiester linkages between 5'-phosphoryl and 3'-hydroxyl groups in double-stranded DNA using NAD as a coenzyme and as the energy source for the reaction. This chain is DNA ligase B, found in Pseudomonas putida (strain W619).